We begin with the raw amino-acid sequence, 758 residues long: 5-methyltetrahydropteroyltriglutamate--homocysteine methyltransferase (758 aa).

Residues R16–K19 and K116 contribute to the 5-methyltetrahydropteroyltri-L-glutamate site. Residues I436–S438 and E489 contribute to the L-homocysteine site. Residues I436–S438 and E489 contribute to the L-methionine site. 5-methyltetrahydropteroyltri-L-glutamate-binding positions include R520–C521 and W566. Position 604 (D604) interacts with L-homocysteine. D604 serves as a coordination point for L-methionine. E610 contacts 5-methyltetrahydropteroyltri-L-glutamate. Zn(2+) contacts are provided by H646, C648, and E670. The active-site Proton donor is H699. Residue C731 participates in Zn(2+) binding.

This sequence belongs to the vitamin-B12 independent methionine synthase family. Requires Zn(2+) as cofactor.

It catalyses the reaction 5-methyltetrahydropteroyltri-L-glutamate + L-homocysteine = tetrahydropteroyltri-L-glutamate + L-methionine. It participates in amino-acid biosynthesis; L-methionine biosynthesis via de novo pathway; L-methionine from L-homocysteine (MetE route): step 1/1. Functionally, catalyzes the transfer of a methyl group from 5-methyltetrahydrofolate to homocysteine resulting in methionine formation. The chain is 5-methyltetrahydropteroyltriglutamate--homocysteine methyltransferase from Nitrosococcus oceani (strain ATCC 19707 / BCRC 17464 / JCM 30415 / NCIMB 11848 / C-107).